Consider the following 416-residue polypeptide: Homogentisate 1,2-dioxygenase (416 aa).

His-275 serves as the catalytic Proton acceptor. 2 residues coordinate Fe cation: His-318 and Glu-324. Homogentisate contacts are provided by Tyr-333 and His-354. Fe cation is bound at residue His-354.

The protein belongs to the homogentisate dioxygenase family. As to quaternary structure, hexamer; dimer of trimers. It depends on Fe cation as a cofactor.

It catalyses the reaction homogentisate + O2 = 4-maleylacetoacetate + H(+). Its pathway is amino-acid degradation; L-phenylalanine degradation; acetoacetate and fumarate from L-phenylalanine: step 4/6. Functionally, involved in the catabolism of homogentisate (2,5-dihydroxyphenylacetate or 2,5-OH-PhAc), a central intermediate in the degradation of phenylalanine and tyrosine. Catalyzes the oxidative ring cleavage of the aromatic ring of homogentisate to yield maleylacetoacetate. In Legionella pneumophila (strain Corby), this protein is Homogentisate 1,2-dioxygenase.